The following is a 174-amino-acid chain: Inactive signal peptidase IA (174 aa).

At 1–7 the chain is on the cytoplasmic side; sequence MKKVVKY. A helical membrane pass occupies residues 8–28; sequence LISLILAIIIVLFVQTFVIVG. Over 29–174 the chain is Extracellular; it reads HVIPNNDMSP…FSKWTVQFKS (146 aa).

The protein belongs to the peptidase S26 family.

Its subcellular location is the cell membrane. Its function is as follows. Catalytically inactive. In Staphylococcus aureus (strain COL), this protein is Inactive signal peptidase IA (spsA).